Reading from the N-terminus, the 154-residue chain is Hemiasterlin resistant protein 1 (154 aa).

Disordered stretches follow at residues 1 to 64 and 86 to 109; these read MVRR…PGLM and GMFT…PAGA. 3 stretches are compositionally biased toward low complexity: residues 7–28, 48–57, and 96–109; these read ASPS…SSFA, TPMGAPMGAP, and AEQA…PAGA. A CHCH domain is found at 116–154; that stretch reads SQPCEFEWRQFVDCAQNQSDVSLCNGFNDIFKQCKARYA. Short sequence motifs (cx9C motif) lie at residues 119–129 and 139–149; these read CEFEWRQFVDC and CNGFNDIFKQC. Intrachain disulfides connect Cys-119–Cys-149 and Cys-129–Cys-139.

The polypeptide is Hemiasterlin resistant protein 1 (har-1) (Caenorhabditis elegans).